A 339-amino-acid chain; its full sequence is Protein FAM50A (339 aa).

The disordered stretch occupies residues 1 to 31; the sequence is MAQYKGAASEAGRAMHLMKKREKQREQMEQM. A2 carries the N-acetylalanine modification. K100 is covalently cross-linked (Glycyl lysine isopeptide (Lys-Gly) (interchain with G-Cter in SUMO2)). The tract at residues 121–177 is disordered; sequence SFTLEEEEEGGEEEEEAAMYEEEMEREEITTKKRKLGKNPDVDTSFLPDRDREEEEN. The span at 124–146 shows a compositional bias: acidic residues; the sequence is LEEEEEGGEEEEEAAMYEEEMER. The Nuclear localization signal signature appears at 152-155; the sequence is KKRK. Positions 168–177 are enriched in basic and acidic residues; sequence PDRDREEEEN.

Belongs to the FAM50 family. Interacts with EFTUD2, a component of the spliceosome U5 complex. Interacts with DDX41, a component of the spliceosome C complex. In terms of tissue distribution, widely expressed in fetal and adult tissues. Mostly abundant in fetal brain, liver and kidney; in the adult, high levels were also observed in heart, skeletal muscle, spleen, thymus, prostate and small intestine. Expressed in fetal cerebellum and hypothalamus. Low expression is observed in fetal temporal lobe.

It localises to the nucleus. Its function is as follows. Probably involved in the regulation of pre-mRNA splicing. The polypeptide is Protein FAM50A (FAM50A) (Homo sapiens (Human)).